A 615-amino-acid polypeptide reads, in one-letter code: 1-deoxy-D-xylulose-5-phosphate synthase (615 aa).

Thiamine diphosphate contacts are provided by residues His76 and 117–119; that span reads GHS. Residue Asp148 participates in Mg(2+) binding. Residues 149-150, Asn177, Tyr284, and Glu365 each bind thiamine diphosphate; that span reads GA. Asn177 is a Mg(2+) binding site.

It belongs to the transketolase family. DXPS subfamily. Homodimer. Mg(2+) is required as a cofactor. It depends on thiamine diphosphate as a cofactor.

The enzyme catalyses D-glyceraldehyde 3-phosphate + pyruvate + H(+) = 1-deoxy-D-xylulose 5-phosphate + CO2. Its pathway is metabolic intermediate biosynthesis; 1-deoxy-D-xylulose 5-phosphate biosynthesis; 1-deoxy-D-xylulose 5-phosphate from D-glyceraldehyde 3-phosphate and pyruvate: step 1/1. Functionally, catalyzes the acyloin condensation reaction between C atoms 2 and 3 of pyruvate and glyceraldehyde 3-phosphate to yield 1-deoxy-D-xylulose-5-phosphate (DXP). The protein is 1-deoxy-D-xylulose-5-phosphate synthase of Francisella tularensis subsp. mediasiatica (strain FSC147).